A 330-amino-acid polypeptide reads, in one-letter code: Dipeptide transport ATP-binding protein DppD (330 aa).

An ABC transporter domain is found at 6-254 (VKELSVHFGD…PKHPYTQALL (249 aa)). An ATP-binding site is contributed by 40–47 (GESGSGKS).

The protein belongs to the ABC transporter superfamily.

Its subcellular location is the cell inner membrane. It carries out the reaction a dipeptide(out) + ATP + H2O = a dipeptide(in) + ADP + phosphate + H(+). Its function is as follows. Part of the ABC transporter DppBCDF involved in dipeptide transport. Responsible for energy coupling to the transport system. This Haemophilus influenzae (strain ATCC 51907 / DSM 11121 / KW20 / Rd) protein is Dipeptide transport ATP-binding protein DppD (dppD).